The following is a 126-amino-acid chain: Protein ApaG (126 aa).

Residues 2–126 (DISTPCIKCQ…FRLAIPNILN (125 aa)) form the ApaG domain.

This Vibrio atlanticus (strain LGP32) (Vibrio splendidus (strain Mel32)) protein is Protein ApaG.